The following is a 420-amino-acid chain: 3-isopropylmalate dehydratase large subunit (420 aa).

[4Fe-4S] cluster-binding residues include Cys300, Cys361, and Cys364.

Belongs to the aconitase/IPM isomerase family. LeuC type 2 subfamily. In terms of assembly, heterodimer of LeuC and LeuD. It depends on [4Fe-4S] cluster as a cofactor.

It catalyses the reaction (2R,3S)-3-isopropylmalate = (2S)-2-isopropylmalate. The protein operates within amino-acid biosynthesis; L-leucine biosynthesis; L-leucine from 3-methyl-2-oxobutanoate: step 2/4. In terms of biological role, catalyzes the isomerization between 2-isopropylmalate and 3-isopropylmalate, via the formation of 2-isopropylmaleate. This Endomicrobium trichonymphae protein is 3-isopropylmalate dehydratase large subunit.